The chain runs to 133 residues: Small ribosomal subunit protein uS8 (133 aa).

This sequence belongs to the universal ribosomal protein uS8 family. As to quaternary structure, part of the 30S ribosomal subunit.

Its function is as follows. One of the primary rRNA binding proteins, it binds directly to 16S rRNA central domain where it helps coordinate assembly of the platform of the 30S subunit. The polypeptide is Small ribosomal subunit protein uS8 (Desulfurococcus amylolyticus (strain DSM 18924 / JCM 16383 / VKM B-2413 / 1221n) (Desulfurococcus kamchatkensis)).